The sequence spans 99 residues: NAD(P)H-quinone oxidoreductase subunit 4L, chloroplastic (99 aa).

3 consecutive transmembrane segments (helical) span residues 1-21 (MFEQ…FGLI), 31-51 (MSLE…SNLF), and 59-79 (IFTL…LAIA).

The protein belongs to the complex I subunit 4L family. In terms of assembly, NDH is composed of at least 16 different subunits, 5 of which are encoded in the nucleus.

The protein resides in the plastid. It is found in the chloroplast thylakoid membrane. The catalysed reaction is a plastoquinone + NADH + (n+1) H(+)(in) = a plastoquinol + NAD(+) + n H(+)(out). It catalyses the reaction a plastoquinone + NADPH + (n+1) H(+)(in) = a plastoquinol + NADP(+) + n H(+)(out). Its function is as follows. NDH shuttles electrons from NAD(P)H:plastoquinone, via FMN and iron-sulfur (Fe-S) centers, to quinones in the photosynthetic chain and possibly in a chloroplast respiratory chain. The immediate electron acceptor for the enzyme in this species is believed to be plastoquinone. Couples the redox reaction to proton translocation, and thus conserves the redox energy in a proton gradient. In Adiantum capillus-veneris (Maidenhair fern), this protein is NAD(P)H-quinone oxidoreductase subunit 4L, chloroplastic.